The following is a 70-amino-acid chain: MIIPWQDIAPETLENLIKEFVLREGTDYGDVEVSLQNKIDQVKHQLASGEVSIVFSELHETVDIQVTKRF.

It belongs to the UPF0270 family.

The chain is UPF0270 protein VS_2853 from Vibrio atlanticus (strain LGP32) (Vibrio splendidus (strain Mel32)).